The primary structure comprises 326 residues: Protease inhibitor (326 aa).

Positions 1–24 (MKTIRTGMMTLAALAVLGTNVVSA) are cleaved as a signal peptide. 2 tandem repeats follow at residues 177–208 (IILH…EVEA) and 272–304 (VALI…KVFA). Positions 177-304 (IILHVDKETK…DLKAEMKVFA (128 aa)) are 2 X 32 AA approximate repeats.

In terms of processing, proteolytically cleaved to yield at least three forms (BBRPI-A, -B, and -C).

The protein resides in the secreted. Its function is as follows. Shows inhibitory activity towards serine proteases, such as trypsin, chymotrypsin and subtilisin. May form a trypsin-inhibitor complex in a molar ratio of 1:1. This chain is Protease inhibitor, found in Brevibacillus choshinensis.